Here is a 173-residue protein sequence, read N- to C-terminus: VQ motif-containing protein 31 (173 aa).

The VQ motif lies at phenylalanine 27–glycine 36. At threonine 46 the chain carries Phosphothreonine. Disordered stretches follow at residues glutamate 76–valine 105 and leucine 143–proline 173. Polar residues predominate over residues proline 86–valine 105. 4 positions are modified to phosphoserine: serine 92, serine 103, serine 146, and serine 149. Residues threonine 154–threonine 165 are compositionally biased toward low complexity. Threonine 165 carries the post-translational modification Phosphothreonine. Phosphoserine occurs at positions 166 and 170.

In terms of processing, phosphorylated on serine and threonine residues by MPK6.

It is found in the nucleus. In terms of biological role, may modulate WRKY transcription factor activities. This is VQ motif-containing protein 31 from Arabidopsis thaliana (Mouse-ear cress).